A 190-amino-acid polypeptide reads, in one-letter code: MNNNLQGDAIAAAIDVLNEERVIAYPTEAVFGVGCDPDSETAVMRLLELKQRPVDKGLILIAANYEQLKPYIDDTMLTDAQRETIFSRWPGPVTFVFPAPATTPRWLTGRFDSLAVRVTDHPLVVALCQAYGKPLVSTSANLSGLPPCRTVDEVRAQFGAAFPVVLGETGGRLNPSEIRDALTGELFRQG.

In terms of domain architecture, YrdC-like spans 7–190 (GDAIAAAIDV…ALTGELFRQG (184 aa)).

This sequence belongs to the SUA5 family. TsaC subfamily.

It is found in the cytoplasm. The catalysed reaction is L-threonine + hydrogencarbonate + ATP = L-threonylcarbamoyladenylate + diphosphate + H2O. Its function is as follows. Required for the formation of a threonylcarbamoyl group on adenosine at position 37 (t(6)A37) in tRNAs that read codons beginning with adenine. Catalyzes the conversion of L-threonine, HCO(3)(-)/CO(2) and ATP to give threonylcarbamoyl-AMP (TC-AMP) as the acyladenylate intermediate, with the release of diphosphate. The chain is Threonylcarbamoyl-AMP synthase from Shigella boydii serotype 4 (strain Sb227).